The sequence spans 679 residues: UvrABC system protein B (679 aa).

A Helicase ATP-binding domain is found at 25-190 (EGVNQGQRYQ…SRNDFDITRG (166 aa)). An ATP-binding site is contributed by 38–45 (GATGTGKT). The short motif at 91–114 (YYDYYQPEAYVPVSDTYIAKTASI) is the Beta-hairpin element. The 163-residue stretch at 429–591 (QVDDLLAEIR…IVPRPAGKRA (163 aa)) folds into the Helicase C-terminal domain. Residues 639 to 674 (PELIDQLETKMKEAAKNLNFEEAASLRDRIKKFRQK) form the UVR domain.

Belongs to the UvrB family. In terms of assembly, forms a heterotetramer with UvrA during the search for lesions. Interacts with UvrC in an incision complex.

The protein resides in the cytoplasm. The UvrABC repair system catalyzes the recognition and processing of DNA lesions. A damage recognition complex composed of 2 UvrA and 2 UvrB subunits scans DNA for abnormalities. Upon binding of the UvrA(2)B(2) complex to a putative damaged site, the DNA wraps around one UvrB monomer. DNA wrap is dependent on ATP binding by UvrB and probably causes local melting of the DNA helix, facilitating insertion of UvrB beta-hairpin between the DNA strands. Then UvrB probes one DNA strand for the presence of a lesion. If a lesion is found the UvrA subunits dissociate and the UvrB-DNA preincision complex is formed. This complex is subsequently bound by UvrC and the second UvrB is released. If no lesion is found, the DNA wraps around the other UvrB subunit that will check the other stand for damage. This chain is UvrABC system protein B, found in Prochlorococcus marinus (strain MIT 9303).